Reading from the N-terminus, the 36-residue chain is Pancreatic polypeptide (36 aa).

The residue at position 36 (Tyr36) is a Tyrosine amide.

The protein belongs to the NPY family.

It localises to the secreted. Functionally, hormone secreted by pancreatic cells that acts as a regulator of pancreatic and gastrointestinal functions probably by signaling through the G protein-coupled receptor NPY4R2. The polypeptide is Pancreatic polypeptide (PPY) (Erinaceus europaeus (Western European hedgehog)).